A 197-amino-acid polypeptide reads, in one-letter code: Peptidyl-tRNA hydrolase (197 aa).

A tRNA-binding site is contributed by Tyr18. Catalysis depends on His23, which acts as the Proton acceptor. Positions 68, 70, and 116 each coordinate tRNA.

It belongs to the PTH family. In terms of assembly, monomer.

The protein resides in the cytoplasm. The enzyme catalyses an N-acyl-L-alpha-aminoacyl-tRNA + H2O = an N-acyl-L-amino acid + a tRNA + H(+). Its function is as follows. Hydrolyzes ribosome-free peptidyl-tRNAs (with 1 or more amino acids incorporated), which drop off the ribosome during protein synthesis, or as a result of ribosome stalling. In terms of biological role, catalyzes the release of premature peptidyl moieties from peptidyl-tRNA molecules trapped in stalled 50S ribosomal subunits, and thus maintains levels of free tRNAs and 50S ribosomes. This chain is Peptidyl-tRNA hydrolase, found in Desulfotalea psychrophila (strain LSv54 / DSM 12343).